Here is a 353-residue protein sequence, read N- to C-terminus: Rhodopsin (353 aa).

Topologically, residues 1–36 (MNGTEGPYFYVPMVNTSGIVRSPYEYPQYYLVNPAA) are extracellular. 2 N-linked (GlcNAc...) asparagine glycosylation sites follow: Asn2 and Asn15. A helical transmembrane segment spans residues 37–61 (YAALGAYMFLLILVGFPINFLTLYV). Residues 62-73 (TIEHKKLRTPLN) are Cytoplasmic-facing. The chain crosses the membrane as a helical span at residues 74–96 (YILLNLAVADLFMVFGGFTTTMY). Residues 97–110 (TSMHGYFVLGRLGC) are Extracellular-facing. Cys110 and Cys187 are disulfide-bonded. Residues 111–133 (NIEGFFATLGGEIALWSLVVLAI) form a helical membrane-spanning segment. The 'Ionic lock' involved in activated form stabilization signature appears at 134 to 136 (ERW). Topologically, residues 134 to 152 (ERWVVVCKPISNFRFGENH) are cytoplasmic. The chain crosses the membrane as a helical span at residues 153–173 (AIMGLAFTWLMAMACAAPPLV). The Extracellular segment spans residues 174-202 (GWSRYIPEGMQCSCGIDYYTRAEGFNNES). An N-linked (GlcNAc...) asparagine glycan is attached at Asn200. Residues 203–224 (FVIYMFVCHFLIPLMVVFFCYG) form a helical membrane-spanning segment. At 225-252 (RLLCAVKEAAAAQQESETTQRAEREVTR) the chain is on the cytoplasmic side. Residues 253 to 274 (MVVIMVIAFLICWCPYAGVAWW) form a helical membrane-spanning segment. At 275–286 (IFTHQGSDFGPV) the chain is on the extracellular side. A helical transmembrane segment spans residues 287 to 308 (FMTIPAFFAKSSSIYNPMIYIC). Position 296 is an N6-(retinylidene)lysine (Lys296). Residues 309-353 (LNKQFRHCMITTLCCGKNPFEEEEGASTASKTEASSVSSSSVSPA) are Cytoplasmic-facing. S-palmitoyl cysteine attachment occurs at residues Cys322 and Cys323. A disordered region spans residues 331 to 353 (EEGASTASKTEASSVSSSSVSPA). Positions 334-353 (ASTASKTEASSVSSSSVSPA) are enriched in low complexity.

This sequence belongs to the G-protein coupled receptor 1 family. Opsin subfamily. Phosphorylated on some or all of the serine and threonine residues present in the C-terminal region. In terms of processing, contains one covalently linked retinal chromophore.

It is found in the membrane. The protein resides in the cell projection. The protein localises to the cilium. Its subcellular location is the photoreceptor outer segment. Its function is as follows. Photoreceptor required for image-forming vision at low light intensity. While most salt water fish species use retinal as chromophore, most freshwater fish use 3-dehydroretinal, or a mixture of retinal and 3-dehydroretinal. Light-induced isomerization of 11-cis to all-trans retinal triggers a conformational change that activates signaling via G-proteins. Subsequent receptor phosphorylation mediates displacement of the bound G-protein alpha subunit by arrestin and terminates signaling. This is Rhodopsin (rho) from Lithognathus mormyrus (Striped seabream).